The chain runs to 428 residues: Glutamine synthetase, chloroplastic (428 aa).

The N-terminal 49 residues, 1-49, are a transit peptide targeting the chloroplast; it reads MAQILAASPTCQMRLTKPSSIASSKLWNSVVLKQKKQSSSKVRSFKVMA. The GS beta-grasp domain occupies 75-155; it reads IIAEYIWIGG…VICDTYTPAG (81 aa). The disordered stretch occupies residues 94-120; the sequence is RTLEKPVEDPSELPKWNYDGSSTGQAP. Ser104 carries the phosphoserine modification. The GS catalytic domain maps to 159-428; the sequence is PTNKRARAAE…LAAQKLSLKV (270 aa).

This sequence belongs to the glutamine synthetase family. In terms of assembly, homooctamer.

The protein resides in the plastid. It localises to the chloroplast. The enzyme catalyses L-glutamate + NH4(+) + ATP = L-glutamine + ADP + phosphate + H(+). The light-modulated chloroplast enzyme, encoded by a nuclear gene and expressed primarily in leaves, is responsible for the reassimilation of the ammonia generated by photorespiration. This Brassica napus (Rape) protein is Glutamine synthetase, chloroplastic (GLN2).